Consider the following 333-residue polypeptide: Flagellar P-ring protein (333 aa).

Positions 1-22 (MRRNILSMFLFITLIIYSSIFA) are cleaved as a signal peptide.

It belongs to the FlgI family. As to quaternary structure, the basal body constitutes a major portion of the flagellar organelle and consists of four rings (L,P,S, and M) mounted on a central rod.

Its subcellular location is the periplasm. It localises to the bacterial flagellum basal body. Assembles around the rod to form the L-ring and probably protects the motor/basal body from shearing forces during rotation. This Fervidobacterium nodosum (strain ATCC 35602 / DSM 5306 / Rt17-B1) protein is Flagellar P-ring protein.